The following is an 81-amino-acid chain: Kappa-theraphotoxin-Gr2c (81 aa).

Positions 1-19 are cleaved as a signal peptide; it reads MKAFFVILGLALLCAYSFA. Positions 20 to 50 are excised as a propeptide; the sequence is LEEQDQLSLRNDLLTVMFAENSELTPETEER. Cystine bridges form between Cys52–Cys66, Cys59–Cys71, and Cys65–Cys75.

This sequence belongs to the neurotoxin 30 (phrixotoxin) family. As to expression, expressed by the venom gland.

Its subcellular location is the secreted. Its function is as follows. Inhibits sodium channels Nav1.1/SCN1A (IC(50)=5.7 uM), Nav1.2/SCN2A (IC(50)=12 uM), Nav1.4/SCN4A (IC(50)=4 uM), Nav1.6/SCN8A (IC(50)=6.6 uM), Nav1.7/SCN9A (IC(50)=13.6-1030 nM), potassium channels Kv11.1/KCNH2 (IC(50)=4.7 uM), as well as high-voltage-gated calcium channels Cav1.2/CACNA1C (IC(50)= nM). Also blocks mechanosensitive ion channels (also named stretch-activated channels or SACs) and the hypotonic cell swelling induced calcium increase associated with the activation of such channels. It can thus be useful in treating cardiac ventricular disturbances. Also induces analgesia in mammals. The sequence is that of Kappa-theraphotoxin-Gr2c from Grammostola rosea (Chilean rose tarantula).